Here is a 214-residue protein sequence, read N- to C-terminus: Orotate phosphoribosyltransferase (214 aa).

Position 26 (lysine 26) interacts with 5-phospho-alpha-D-ribose 1-diphosphate. 34-35 (FF) contributes to the orotate binding site. 5-phospho-alpha-D-ribose 1-diphosphate contacts are provided by residues 72–73 (YK), arginine 99, lysine 100, lysine 103, histidine 105, and 124–132 (DDVITAGTA). Positions 128 and 156 each coordinate orotate.

The protein belongs to the purine/pyrimidine phosphoribosyltransferase family. PyrE subfamily. Homodimer. It depends on Mg(2+) as a cofactor.

It catalyses the reaction orotidine 5'-phosphate + diphosphate = orotate + 5-phospho-alpha-D-ribose 1-diphosphate. Its pathway is pyrimidine metabolism; UMP biosynthesis via de novo pathway; UMP from orotate: step 1/2. Its function is as follows. Catalyzes the transfer of a ribosyl phosphate group from 5-phosphoribose 1-diphosphate to orotate, leading to the formation of orotidine monophosphate (OMP). The sequence is that of Orotate phosphoribosyltransferase from Pasteurella multocida (strain Pm70).